Reading from the N-terminus, the 235-residue chain is 2,3,4,5-tetrahydropyridine-2,6-dicarboxylate N-acetyltransferase (235 aa).

The protein belongs to the transferase hexapeptide repeat family. DapH subfamily.

The enzyme catalyses (S)-2,3,4,5-tetrahydrodipicolinate + acetyl-CoA + H2O = L-2-acetamido-6-oxoheptanedioate + CoA. The protein operates within amino-acid biosynthesis; L-lysine biosynthesis via DAP pathway; LL-2,6-diaminopimelate from (S)-tetrahydrodipicolinate (acetylase route): step 1/3. Functionally, catalyzes the transfer of an acetyl group from acetyl-CoA to tetrahydrodipicolinate. The sequence is that of 2,3,4,5-tetrahydropyridine-2,6-dicarboxylate N-acetyltransferase from Anoxybacillus flavithermus (strain DSM 21510 / WK1).